A 632-amino-acid polypeptide reads, in one-letter code: Extracellular metalloproteinase 2 (632 aa).

An N-terminal signal peptide occupies residues 1–19 (MHGLLLAGLAVALPLGVAG). A propeptide spanning residues 20–244 (HPARPQTALS…VHNVVDYVAS (225 aa)) is cleaved from the precursor. The N-linked (GlcNAc...) asparagine glycan is linked to Asn270. Residues 294 to 310 (NNVAAQDNPSGGSQWEN) show a composition bias toward polar residues. The segment at 294 to 313 (NNVAAQDNPSGGSQWENNYR) is disordered. His429 is a Zn(2+) binding site. Glu430 is a catalytic residue. His433 provides a ligand contact to Zn(2+).

It belongs to the peptidase M36 family. It depends on Zn(2+) as a cofactor.

The protein resides in the secreted. In terms of biological role, secreted metalloproteinase probably acting as a virulence factor. This Arthroderma otae (Microsporum canis) protein is Extracellular metalloproteinase 2 (MEP2).